A 210-amino-acid chain; its full sequence is Probable septum site-determining protein MinC (210 aa).

Belongs to the MinC family. Interacts with MinD and FtsZ.

Functionally, cell division inhibitor that blocks the formation of polar Z ring septums. Rapidly oscillates between the poles of the cell to destabilize FtsZ filaments that have formed before they mature into polar Z rings. Prevents FtsZ polymerization. The polypeptide is Probable septum site-determining protein MinC (Thermotoga petrophila (strain ATCC BAA-488 / DSM 13995 / JCM 10881 / RKU-1)).